We begin with the raw amino-acid sequence, 106 residues long: Small ribosomal subunit protein mS33 (106 aa).

At Ser2 the chain carries N-acetylserine. Positions 81–106 are disordered; that stretch reads EQRRLKKLRGKGKPRKGEGKRATKKK. Positions 84–94 are enriched in basic residues; it reads RLKKLRGKGKP. The span at 95–106 shows a compositional bias: basic and acidic residues; the sequence is RKGEGKRATKKK.

The protein belongs to the mitochondrion-specific ribosomal protein mS33 family. In terms of assembly, component of the mitochondrial ribosome small subunit (28S) which comprises a 12S rRNA and about 30 distinct proteins.

The protein localises to the mitochondrion. The sequence is that of Small ribosomal subunit protein mS33 (Mrps33) from Mus musculus (Mouse).